Here is a 185-residue protein sequence, read N- to C-terminus: Ribosome-recycling factor (185 aa).

This sequence belongs to the RRF family.

The protein localises to the cytoplasm. Its function is as follows. Responsible for the release of ribosomes from messenger RNA at the termination of protein biosynthesis. May increase the efficiency of translation by recycling ribosomes from one round of translation to another. This chain is Ribosome-recycling factor, found in Klebsiella pneumoniae (strain 342).